A 72-amino-acid chain; its full sequence is Dermaseptin-A4 (72 aa).

The first 22 residues, 1–22, serve as a signal peptide directing secretion; sequence MAFLKKSLFLVLFLGMVSLSIC. Residues 23 to 41 constitute a propeptide that is removed on maturation; the sequence is EEEKREEENEQEDDEQSEE. A disordered region spans residues 24-43; sequence EEKREEENEQEDDEQSEEKR. Positions 30 to 39 are enriched in acidic residues; sequence ENEQEDDEQS. Ala-69 is subject to Alanine amide. Positions 71-72 are excised as a propeptide; sequence EQ.

This sequence belongs to the frog skin active peptide (FSAP) family. Dermaseptin subfamily. Expressed by the skin glands.

The protein resides in the secreted. Possesses a potent antimicrobial activity against Gram-positive and Gram-negative bacteria. Probably acts by disturbing membrane functions with its amphipathic structure. The chain is Dermaseptin-A4 from Agalychnis annae (Blue-sided leaf frog).